The following is a 312-amino-acid chain: Glyoxylate/hydroxypyruvate reductase A (312 aa).

Arg227 is an active-site residue. His275 (proton donor) is an active-site residue.

This sequence belongs to the D-isomer specific 2-hydroxyacid dehydrogenase family. GhrA subfamily.

The protein resides in the cytoplasm. It carries out the reaction glycolate + NADP(+) = glyoxylate + NADPH + H(+). The enzyme catalyses (R)-glycerate + NAD(+) = 3-hydroxypyruvate + NADH + H(+). It catalyses the reaction (R)-glycerate + NADP(+) = 3-hydroxypyruvate + NADPH + H(+). Functionally, catalyzes the NADPH-dependent reduction of glyoxylate and hydroxypyruvate into glycolate and glycerate, respectively. In Escherichia coli (strain SMS-3-5 / SECEC), this protein is Glyoxylate/hydroxypyruvate reductase A.